Reading from the N-terminus, the 503-residue chain is ATP synthase subunit alpha (503 aa).

ATP is bound at residue 169-176; it reads GDRKTGKT.

Belongs to the ATPase alpha/beta chains family. As to quaternary structure, F-type ATPases have 2 components, CF(1) - the catalytic core - and CF(0) - the membrane proton channel. CF(1) has five subunits: alpha(3), beta(3), gamma(1), delta(1), epsilon(1). CF(0) has three main subunits: a(1), b(2) and c(9-12). The alpha and beta chains form an alternating ring which encloses part of the gamma chain. CF(1) is attached to CF(0) by a central stalk formed by the gamma and epsilon chains, while a peripheral stalk is formed by the delta and b chains.

The protein localises to the cell membrane. It carries out the reaction ATP + H2O + 4 H(+)(in) = ADP + phosphate + 5 H(+)(out). With respect to regulation, increases 2-fold following exposure to low pH. Produces ATP from ADP in the presence of a proton gradient across the membrane. The alpha chain is a regulatory subunit. This chain is ATP synthase subunit alpha, found in Lactobacillus acidophilus (strain ATCC 700396 / NCK56 / N2 / NCFM).